The sequence spans 267 residues: Dihydropteroate synthase (267 aa).

Residues 1–251 (MTKTKIIGIL…NVDLNVKLAQ (251 aa)) form the Pterin-binding domain. Residue Asn11 coordinates Mg(2+). Residues Thr51, Asp84, Asn103, Asp167, Lys203, and 239 to 241 (RVH) each bind (7,8-dihydropterin-6-yl)methyl diphosphate.

This sequence belongs to the DHPS family. Requires Mg(2+) as cofactor.

The catalysed reaction is (7,8-dihydropterin-6-yl)methyl diphosphate + 4-aminobenzoate = 7,8-dihydropteroate + diphosphate. Its pathway is cofactor biosynthesis; tetrahydrofolate biosynthesis; 7,8-dihydrofolate from 2-amino-4-hydroxy-6-hydroxymethyl-7,8-dihydropteridine diphosphate and 4-aminobenzoate: step 1/2. Catalyzes the condensation of para-aminobenzoate (pABA) with 6-hydroxymethyl-7,8-dihydropterin diphosphate (DHPt-PP) to form 7,8-dihydropteroate (H2Pte), the immediate precursor of folate derivatives. This Staphylococcus haemolyticus protein is Dihydropteroate synthase (folP).